The sequence spans 169 residues: Chorismate pyruvate-lyase (169 aa).

Substrate-binding residues include methionine 35, arginine 77, leucine 115, and glutamate 156.

Belongs to the UbiC family. In terms of assembly, monomer.

The protein resides in the cytoplasm. The catalysed reaction is chorismate = 4-hydroxybenzoate + pyruvate. It participates in cofactor biosynthesis; ubiquinone biosynthesis. Functionally, removes the pyruvyl group from chorismate, with concomitant aromatization of the ring, to provide 4-hydroxybenzoate (4HB) for the ubiquinone pathway. The chain is Chorismate pyruvate-lyase from Cronobacter sakazakii (strain ATCC BAA-894) (Enterobacter sakazakii).